A 358-amino-acid chain; its full sequence is N-acylethanolamine-hydrolyzing acid amidase (358 aa).

Residues Met1–Gly26 form the signal peptide. N-linked (GlcNAc...) asparagine glycans are attached at residues Asn39 and Asn108. The active-site Nucleophile is Cys127. N-linked (GlcNAc...) asparagine glycosylation is found at Asn310, Asn334, and Asn356.

This sequence belongs to the acid ceramidase family. Heterodimer of an alpha and a beta subunit, produced by autocatalytic cleavage. N-glycosylated. Tunicamycin treatment causes a reduction in specific activity against N-palmitoylethanolamine. Post-translationally, autoproteolytic cleavage at pH 4.5 gives rise to the alpha and beta subunit. Cleavage gives rise to a conformation change that activates the enzyme. The same catalytic Cys residue mediates the autoproteolytic cleavage and subsequent hydrolysis of lipid substrates.

It localises to the lysosome. The protein resides in the membrane. The enzyme catalyses N-hexadecanoylethanolamine + H2O = ethanolamine + hexadecanoate. The catalysed reaction is an N-(long-chain fatty acyl)ethanolamine + H2O = a long-chain fatty acid + ethanolamine. It catalyses the reaction N-dodecanoylethanolamine + H2O = dodecanoate + ethanolamine. It carries out the reaction N-tetradecanoylethanolamine + H2O = tetradecanoate + ethanolamine. The enzyme catalyses an N-acylsphing-4-enine + H2O = sphing-4-enine + a fatty acid. The catalysed reaction is N-hexadecanoylsphing-4-enine + H2O = sphing-4-enine + hexadecanoate. It catalyses the reaction N-dodecanoylsphing-4-enine + H2O = dodecanoate + sphing-4-enine. Its pathway is lipid metabolism; fatty acid metabolism. Its function is as follows. Degrades bioactive fatty acid amides to their corresponding acids, with the following preference: N-palmitoylethanolamine &gt; N-myristoylethanolamine &gt; N-stearoylethanolamine &gt; N-oleoylethanolamine &gt; N-linoleoylethanolamine &gt; N-arachidonoylethanolamine. The sequence is that of N-acylethanolamine-hydrolyzing acid amidase from Oryctolagus cuniculus (Rabbit).